The chain runs to 226 residues: Ribonuclease 3 (226 aa).

Positions 6–128 (INRLQRKLGY…LIGGVFLDSD (123 aa)) constitute an RNase III domain. Position 41 (Glu41) interacts with Mg(2+). Asp45 is a catalytic residue. The Mg(2+) site is built by Asp114 and Glu117. Glu117 is an active-site residue. The 71-residue stretch at 155 to 225 (DPKTRLQEYL…AEQALKQLEL (71 aa)) folds into the DRBM domain.

The protein belongs to the ribonuclease III family. As to quaternary structure, homodimer. Mg(2+) is required as a cofactor.

Its subcellular location is the cytoplasm. The catalysed reaction is Endonucleolytic cleavage to 5'-phosphomonoester.. Functionally, digests double-stranded RNA. Involved in the processing of primary rRNA transcript to yield the immediate precursors to the large and small rRNAs (23S and 16S). Processes some mRNAs, and tRNAs when they are encoded in the rRNA operon. Processes pre-crRNA and tracrRNA of type II CRISPR loci if present in the organism. This chain is Ribonuclease 3, found in Yersinia pseudotuberculosis serotype O:1b (strain IP 31758).